We begin with the raw amino-acid sequence, 329 residues long: Quinone oxidoreductase (329 aa).

At Ala2 the chain carries N-acetylalanine. Lys23 carries the post-translational modification N6-acetyllysine. Residues Tyr53, Ser158 to Val161, Gly181, His200, Asn229, Val246 to Arg249, and Val269 to Leu271 each bind NADP(+). At Ser248 the chain carries Phosphoserine.

Belongs to the zinc-containing alcohol dehydrogenase family. Quinone oxidoreductase subfamily. In terms of assembly, homotetramer.

It is found in the cytoplasm. The catalysed reaction is 2 a quinone + NADPH + H(+) = 2 a 1,4-benzosemiquinone + NADP(+). Does not have alcohol dehydrogenase activity. Binds NADP and acts through a one-electron transfer process. Orthoquinones, such as 1,2-naphthoquinone or 9,10-phenanthrenequinone, are the best substrates (in vitro). May act in the detoxification of xenobiotics. Interacts with (AU)-rich elements (ARE) in the 3'-UTR of target mRNA species and enhances their stability. NADPH binding interferes with mRNA binding. This Sus scrofa (Pig) protein is Quinone oxidoreductase (CRYZ).